Consider the following 407-residue polypeptide: Putative glucose/galactose transporter (407 aa).

The next 12 membrane-spanning stretches (helical) occupy residues 11–31 (GSLT…DILI), 47–67 (LIQF…GNVI), 70–90 (IGYP…CALF), 96–116 (FGSY…IVCL), 139–159 (VQAF…LLIF), 180–200 (VQMP…VMYL), 225–245 (FVFG…IGSF), 263–283 (HYLV…SALM), 300–320 (IILI…ALTF), 321–341 (VGFF…LNLG), 349–369 (GVIS…GVVT), and 378–398 (NLLY…FFAL).

The protein belongs to the major facilitator superfamily. FHS transporter (TC 2.A.1.7) family.

The protein localises to the cell inner membrane. Intake of glucose and galactose. The chain is Putative glucose/galactose transporter (gluP) from Helicobacter pylori (strain J99 / ATCC 700824) (Campylobacter pylori J99).